A 96-amino-acid polypeptide reads, in one-letter code: MNIRPLHDRVIIKREEVETRSAGGIVLTGSAATKSTRAKVLAVGKGRILENGTVQPLDVKVGDTVIFNDGYGVKSEKIDGEEVLIISENDILAIVE.

This sequence belongs to the GroES chaperonin family. As to quaternary structure, heptamer of 7 subunits arranged in a ring. Interacts with the chaperonin GroEL.

The protein resides in the cytoplasm. Functionally, together with the chaperonin GroEL, plays an essential role in assisting protein folding. The GroEL-GroES system forms a nano-cage that allows encapsulation of the non-native substrate proteins and provides a physical environment optimized to promote and accelerate protein folding. GroES binds to the apical surface of the GroEL ring, thereby capping the opening of the GroEL channel. In Haemophilus influenzae (strain PittEE), this protein is Co-chaperonin GroES.